The chain runs to 168 residues: MKTVRVPIALVQSVMRTLREKLQQANKYLNTDYPEPTLQYNQRGTIAGSAYYANWEIRLNPTLLIENKQNFIEEVIPHELAHLLVSRHFGRVAPHGKEWKWMMETVLQVSAKRTHHFDISNVTAKTFSYACRCQEIHQLTLRRHNKVQRGETQYRCRHCQAILQLIKE.

In terms of domain architecture, SprT-like spans 20-166 (EKLQQANKYL…RHCQAILQLI (147 aa)). His-78 provides a ligand contact to Zn(2+). Residue Glu-79 is part of the active site. Position 82 (His-82) interacts with Zn(2+).

The protein belongs to the SprT family. The cofactor is Zn(2+).

The protein resides in the cytoplasm. The polypeptide is Protein SprT (Proteus mirabilis (strain HI4320)).